Consider the following 1278-residue polypeptide: MNQQNPEEEVSLVNNSGGGGIIEAPAIVEEKEEEGLQQKQEETIESTDPILVVVEEKLLEKSVDGEKEDDNSSSSNMEIDPVSPATVFCVKLKQPNSNLLHKMSVPELCRNFSAVAWCGKLNAIACASETCARIPSSKANTPFWIPIHILIPERPTECAVFNVVADSPRDSVQFIEWSPTSCPRALLIANFHGRITIWTQPTQGSANLVHDATSWQCEHEWRQDIAVVTKWLTGASPYRWLSSKPSSGTNAKSTFEEKFLSQSSESSARWPNFLCVCSVFSSGSVQIHWSQWPSNQGSTAPKWFSTKKGLLGAGPSGIMAADAIITDSGAMHVAGVPIVNPSTIVVWEVTPGPGNGLQATPKISTGSRVPPSLSSSSWTGFAPLAAYLFSWQEYLISEIKQGKKPSDQDSSDAISLSCSPVSNFSAYVSPEAAAQSAATTTWGSGVTAVAFDPTRGGSVIAVVIVEGQYMSPYDPDEGPSITGWRVQRWESSVQPVVLHQIFGNPTSNFGGQVPTQTVWVSRVDMSIPPTKDFKNHQVAAAGPSVDAPKEPDSGDEKANKVVFDPFDLPSDIRTLARIVYSAHGGEIAIAFLRGGVHIFSGPTFSPVENYQINVGSAIAAPAFSPTSCCSASVWHDAAKDCAMLKIIRVLPPALPRNQSKVDQSTWERAIAERFWWSLLVGVDWWDAVGCTQSAAEDGIVSLNSVIAVMDADFHSLPSTQHRQQYGPNLDRIKCRLLEGTNAQEVRAMVLDMQARLLLDMLGKGIESALVNPSALVFEPWRVDGETITGINPEAMAVDPALVSSIQAYVDAVLDLASHFITRLRRYASFCRTLASHAASAGTGSNRNNVTSPTQNASSPATPQVFPDKSLYLAVGQPTTTTTTTATTNSSGSSHVQAWMQGAIAKISSSNDGSNSTASPISGSPTFMPISINTGTFPGTPAVRLIGDCHFLHRLCQLLLFCFLQRSSRFPQRNADVSSQKLQTGATSKLEEVNSAKPTPALNRIEDAQGFRGAQLGTGVKGIDENSARTTKMGSGNAGQGYTYEEVRVLFHILMDLCKRTSGLAHPLPGSQVGSGNIQVRLHYIDGNYTVLPEVVEAALGPHMQNMPRPRGADAAGLLLRELELHPPSEEWHRRNLFGGPGSEPEDMILTDDVSKLSNSLDLPDTNFSGICDGYNRVHSLWPRKRRMSERDAAFGSNTSVGLGAYLGIMGSRRDVVTATWKTGLEGVWYKCIRCLRQTSAFASPGATKQPNPNERETWWTSRWVYCCPMCGGTWVRVV.

Residues 1-10 show a composition bias toward acidic residues; the sequence is MNQQNPEEEV. Disordered stretches follow at residues 1-21, 530-557, and 839-861; these read MNQQ…GGGI, TKDF…GDEK, and SAGT…SPAT. Over residues 547-557 the composition is skewed to basic and acidic residues; the sequence is APKEPDSGDEK. A compositionally biased stretch (polar residues) spans 841–861; it reads GTGSNRNNVTSPTQNASSPAT.

This sequence belongs to the plant Mediator complex subunit 16 family. Component of the Mediator complex.

The protein localises to the nucleus. Component of the Mediator complex, a coactivator involved in the regulated transcription of nearly all RNA polymerase II-dependent genes. Mediator functions as a bridge to convey information from gene-specific regulatory proteins to the basal RNA polymerase II transcription machinery. The Mediator complex, having a compact conformation in its free form, is recruited to promoters by direct interactions with regulatory proteins and serves for the assembly of a functional preinitiation complex with RNA polymerase II and the general transcription factors. Involved in the regulation of the circadian clock, in the control of flowering time, in freezing- and osmotic-stress tolerance and in both salicylic acid- and jasmonate-mediated defense gene expression. The sequence is that of Mediator of RNA polymerase II transcription subunit 16 (MED16) from Arabidopsis thaliana (Mouse-ear cress).